The following is a 436-amino-acid chain: Septin-7 (436 aa).

Residue Ser2 is modified to N-acetylserine. A Phosphotyrosine modification is found at Tyr29. Positions 46 to 315 (RGFEFTLMVV…ENYRSRKLAA (270 aa)) constitute a Septin-type G domain. The tract at residues 46–316 (RGFEFTLMVV…NYRSRKLAAV (271 aa)) is interaction with SEPTIN12. The G1 motif stretch occupies residues 56-63 (GESGLGKS). 56-63 (GESGLGKS) lines the GTP pocket. Residue Ser76 is modified to Phosphoserine. GTP contacts are provided by residues Thr89, Gly115, and 194–202 (KADTLTPEE). Residues 112–115 (DTPG) are G3 motif. Residues 193 to 196 (AKAD) are G4 motif. Residue Thr227 is modified to Phosphothreonine. Residues Gly249 and Arg264 each contribute to the GTP site. Residues 331 to 436 (TKSPLAQMEE…EKNKKKGKIF (106 aa)) are a coiled coil. Phosphoserine is present on Ser333. At Lys372 the chain carries N6-acetyllysine. A compositionally biased stretch (basic and acidic residues) spans 377 to 409 (ELQRRHEQMKKNLEAQHKELEEKRRQFEEEKAN). Residues 377–436 (ELQRRHEQMKKNLEAQHKELEEKRRQFEEEKANWEAQQRILEQQNSSRTLEKNKKKGKIF) form a disordered region. Ser423 carries the post-translational modification Phosphoserine. Thr425 is subject to Phosphothreonine.

This sequence belongs to the TRAFAC class TrmE-Era-EngA-EngB-Septin-like GTPase superfamily. Septin GTPase family. In terms of assembly, septins polymerize into heterooligomeric protein complexes that form filaments, and associate with cellular membranes, actin filaments and microtubules. GTPase activity is required for filament formation. Filaments are assembled from asymmetrical heterotrimers, composed of SEPTIN2, SEPTIN6 and SEPTIN7 that associate head-to-head to form a hexameric unit. Within the trimer, directly interacts with SEPTIN6, while interaction with SEPTIN2 seems indirect. In the absence of SEPTIN6, forms homodimers. Interacts directly with CENPE and links CENPE to septin filaments composed of SEPTIN2, SEPTIN6 and SEPTIN7. Interacts with SEPTIN5. Component of a septin core octameric complex consisting of SEPTIN12, SEPTIN7, SEPTIN6 and SEPTIN2 or SEPTIN4 in the order 12-7-6-2-2-6-7-12 or 12-7-6-4-4-6-7-12 and located in the sperm annulus; the SEPTIN12:SEPTIN7 association is mediated by the respective GTP-binding domains. Interacts with SEPTIN2, SEPTIN7, SEPTIN8, SEPTIN9 and SEPTIN11.

It is found in the cytoplasm. The protein localises to the chromosome. The protein resides in the centromere. Its subcellular location is the kinetochore. It localises to the cytoskeleton. It is found in the spindle. The protein localises to the cleavage furrow. The protein resides in the midbody. Its subcellular location is the cilium axoneme. It localises to the cell projection. It is found in the cilium. The protein localises to the flagellum. Functionally, filament-forming cytoskeletal GTPase. Required for normal organization of the actin cytoskeleton. Required for normal progress through mitosis. Involved in cytokinesis. Required for normal association of CENPE with the kinetochore. Plays a role in ciliogenesis and collective cell movements. Forms a filamentous structure with SEPTIN12, SEPTIN6, SEPTIN2 and probably SEPTIN4 at the sperm annulus which is required for the structural integrity and motility of the sperm tail during postmeiotic differentiation. The sequence is that of Septin-7 from Rattus norvegicus (Rat).